The sequence spans 224 residues: MMAAQPTIREVLFNPVFQNNPIGLQILGICSALAVTSNLKTATVMAIALTLVTGFSNLFISMIRRQIPSSIRMIVQMVIIASLVIVVDQVLKAYAYSLSKQLSVFVGLIITNCIVMGRAEAFAMANPPLVSFFDGIGNGLGYSAMLLVLGFVRELFGAGKLYGISVLPTVNDGGWYQPNGLLLLPPSAFFLIGLIIWALRTWKKDQVEAPTYKMAPQVSSKEAY.

Transmembrane regions (helical) follow at residues 43-63 (TVMAIALTLVTGFSNLFISMI), 67-87 (IPSSIRMIVQMVIIASLVIVV), 104-124 (VFVGLIITNCIVMGRAEAFAM), 132-152 (FFDGIGNGLGYSAMLLVLGFV), and 179-199 (NGLLLLPPSAFFLIGLIIWAL).

The protein belongs to the NqrDE/RnfAE family. In terms of assembly, composed of six subunits; NqrA, NqrB, NqrC, NqrD, NqrE and NqrF.

It is found in the cell inner membrane. The catalysed reaction is a ubiquinone + n Na(+)(in) + NADH + H(+) = a ubiquinol + n Na(+)(out) + NAD(+). NQR complex catalyzes the reduction of ubiquinone-1 to ubiquinol by two successive reactions, coupled with the transport of Na(+) ions from the cytoplasm to the periplasm. NqrA to NqrE are probably involved in the second step, the conversion of ubisemiquinone to ubiquinol. The protein is Na(+)-translocating NADH-quinone reductase subunit D of Pseudomonas aeruginosa (strain LESB58).